The primary structure comprises 332 residues: METGHPPSLQELCVVVLMRHHAQLEDIGHMPYALVRRVLLKMSAEQLLRLERASPALLLEDEEAWQQLLKKDFPTNVHEVWVARKKDVYEYYLESVRELGPQVLEDRALVRSLLRAAVCKDPVLFKYRVPSRQLYQRYVHEDARRQELSAARLRQSTLQLQQEKQKTRITQLEDPLYLERELNAGRQRAAPQRSSIYLKSFKELRQRQAHFRSGGYDPTQRRIVRVQTPSAQPAASLHPPPQSAPMAGSPQKPAPPEQPLAASPTPEAPGPLAQRRRPSARRQPPPASPAKRRSALFSSPALSTLLPQQDDTDSDTGGRPPKKPRVYIHTPR.

Positions Leu24–Leu68 constitute an F-box domain. Residues Thr228–Arg332 are disordered. Residues Leu296–Gln309 show a composition bias toward polar residues. The span at Pro320–Arg332 shows a compositional bias: basic residues.

The protein belongs to the ELA1 family. As to quaternary structure, heterodimer with ELC1. Component of a CRL3 E3 ubiquitin ligase complex consisting of a cullin, the linker protein ELC1, the substrate receptor ELA1, and a RING protein. Interacts with the large RNA polymerase II subunit RPO21 in a manner dependent on DEF1.

Its function is as follows. As part of the CRL3 E3 ubiquitin ligase complex; polyubiquitylates monoubiquitylated RNA polymerase II subunit RPO21 to trigger its proteolysis; plays a role in global genomic repair. The protein is Elongin-A (ELA1) of Eremothecium gossypii (strain ATCC 10895 / CBS 109.51 / FGSC 9923 / NRRL Y-1056) (Yeast).